The chain runs to 474 residues: Cysteine--tRNA ligase (474 aa).

Cys-29 contributes to the Zn(2+) binding site. A 'HIGH' region motif is present at residues 31–41 (ITPYDHVHVGH). Residues Cys-215, His-240, and Glu-244 each coordinate Zn(2+). Residues 273–277 (KMSKS) carry the 'KMSKS' region motif. Residue Lys-276 participates in ATP binding.

The protein belongs to the class-I aminoacyl-tRNA synthetase family. Zn(2+) is required as a cofactor.

Its subcellular location is the cytoplasm. It catalyses the reaction tRNA(Cys) + L-cysteine + ATP = L-cysteinyl-tRNA(Cys) + AMP + diphosphate. The polypeptide is Cysteine--tRNA ligase (Pyrobaculum aerophilum (strain ATCC 51768 / DSM 7523 / JCM 9630 / CIP 104966 / NBRC 100827 / IM2)).